Consider the following 166-residue polypeptide: Regulatory protein RecX (166 aa).

Belongs to the RecX family.

Its subcellular location is the cytoplasm. Functionally, modulates RecA activity. This chain is Regulatory protein RecX, found in Shigella boydii serotype 4 (strain Sb227).